We begin with the raw amino-acid sequence, 489 residues long: uncharacterized protein (489 aa).

Position 26 is a phosphothreonine (Thr26). Phosphoserine is present on Ser27. 3 helical membrane passes run Ile63–Ala83, Leu182–Ala202, and Val221–Leu241. Disordered stretches follow at residues Pro260–Glu312, Ser401–Ser435, and Pro450–His489. Ser263 is modified (phosphoserine). A compositionally biased stretch (polar residues) spans Gln268–Asn282. Over residues Pro450 to Asn465 the composition is skewed to polar residues. Low complexity predominate over residues Ser477–His489.

It is found in the endoplasmic reticulum membrane. This is an uncharacterized protein from Schizosaccharomyces pombe (strain 972 / ATCC 24843) (Fission yeast).